Here is a 332-residue protein sequence, read N- to C-terminus: D-alanine--D-alanine ligase (332 aa).

An ATP-grasp domain is found at lysine 112 to alanine 312. Position 138–193 (phenylalanine 138–threonine 193) interacts with ATP. Mg(2+) contacts are provided by aspartate 265, glutamate 279, and asparagine 281.

The protein belongs to the D-alanine--D-alanine ligase family. Mg(2+) serves as cofactor. The cofactor is Mn(2+).

The protein localises to the cytoplasm. The catalysed reaction is 2 D-alanine + ATP = D-alanyl-D-alanine + ADP + phosphate + H(+). Its pathway is cell wall biogenesis; peptidoglycan biosynthesis. Its function is as follows. Cell wall formation. The chain is D-alanine--D-alanine ligase from Acidovorax ebreus (strain TPSY) (Diaphorobacter sp. (strain TPSY)).